Here is an 89-residue protein sequence, read N- to C-terminus: Elongation factor 1-beta (89 aa).

It belongs to the EF-1-beta/EF-1-delta family.

Functionally, promotes the exchange of GDP for GTP in EF-1-alpha/GDP, thus allowing the regeneration of EF-1-alpha/GTP that could then be used to form the ternary complex EF-1-alpha/GTP/AAtRNA. The chain is Elongation factor 1-beta from Methanocella arvoryzae (strain DSM 22066 / NBRC 105507 / MRE50).